The chain runs to 1768 residues: Maestro heat-like repeat-containing protein family member 1 homolog (1768 aa).

6 HEAT repeats span residues 4–47 (TSQV…HQPN), 164–203 (VHNP…AICS), 816–856 (QRLQ…AVHP), 1166–1204 (QSQM…ARGA), 1483–1521 (EQLL…CSST), and 1731–1768 (TISR…HDFH).

It belongs to the MROH1 family. In terms of assembly, homooligomer; homooligomerizes at lysosome scission sites.

It localises to the lysosome membrane. Its function is as follows. Lysosome fission factor. Recruited to lysosomes by rab-7 at scission sites and homooligomerizes to mediate the constriction and scission of lysosomal tubules. May sever membranes by inserting amphipathic helices into one bilayer leaflet. Lysosome fission is required to maintain their steady-state number, shape, size, composition and function, and to accomplish regeneration. The protein is Maestro heat-like repeat-containing protein family member 1 homolog of Caenorhabditis elegans.